Consider the following 234-residue polypeptide: Segregation and condensation protein A (234 aa).

It belongs to the ScpA family. As to quaternary structure, component of a cohesin-like complex composed of ScpA, ScpB and the Smc homodimer, in which ScpA and ScpB bind to the head domain of Smc. The presence of the three proteins is required for the association of the complex with DNA.

The protein resides in the cytoplasm. Participates in chromosomal partition during cell division. May act via the formation of a condensin-like complex containing Smc and ScpB that pull DNA away from mid-cell into both cell halves. This is Segregation and condensation protein A from Streptococcus pyogenes serotype M18 (strain MGAS8232).